The sequence spans 484 residues: Folate synthesis bifunctional protein (484 aa).

Positions 15-141 are HPPK; the sequence is VIALGSNVGN…PFVLAPLVDL (127 aa). Positions 202–470 constitute a Pterin-binding domain; it reads TYVMGILNLT…NVRDNVDAAR (269 aa). Residues 204 to 484 are DHPS; it reads VMGILNLTPD…MMTKRFKNVD (281 aa). N209 contacts Mg(2+). (7,8-dihydropterin-6-yl)methyl diphosphate-binding positions include T249, D286, N305, D378, K423, and 458-460; that span reads RVH.

It in the N-terminal section; belongs to the HPPK family. The protein in the C-terminal section; belongs to the DHPS family. Requires Mg(2+) as cofactor. As to expression, expressed exclusively in reproductive tissues.

The protein localises to the cytoplasm. The protein resides in the cytosol. It carries out the reaction 6-hydroxymethyl-7,8-dihydropterin + ATP = (7,8-dihydropterin-6-yl)methyl diphosphate + AMP + H(+). The enzyme catalyses (7,8-dihydropterin-6-yl)methyl diphosphate + 4-aminobenzoate = 7,8-dihydropteroate + diphosphate. It functions in the pathway cofactor biosynthesis; tetrahydrofolate biosynthesis; 2-amino-4-hydroxy-6-hydroxymethyl-7,8-dihydropteridine diphosphate from 7,8-dihydroneopterin triphosphate: step 4/4. It participates in cofactor biosynthesis; tetrahydrofolate biosynthesis; 7,8-dihydrofolate from 2-amino-4-hydroxy-6-hydroxymethyl-7,8-dihydropteridine diphosphate and 4-aminobenzoate: step 1/2. Inhibited by sulfanilamide. Its function is as follows. Catalyzes the first two consecutive steps of tetrahydrofolate biosynthesis. Plays a role in seed stress response and survival. The polypeptide is Folate synthesis bifunctional protein (Arabidopsis thaliana (Mouse-ear cress)).